Here is a 149-residue protein sequence, read N- to C-terminus: Gamma-glutamylaminecyclotransferase (149 aa).

7 to 10 (YGTL) contributes to the substrate binding site. Glu82 acts as the Proton acceptor in catalysis.

The protein belongs to the gamma-glutamylcyclotransferase family. As to quaternary structure, monomer.

It carries out the reaction epsilon-(gamma-L-glutamyl)-L-lysine = 5-oxo-L-proline + L-lysine. Contributes to degradation of proteins cross-linked by transglutaminases by degrading the cross-link between a lysine and a glutamic acid residue. Catalyzes the formation of 5-oxo-L-proline from L-gamma-glutamyl-L-epsilon-lysine. Inactive with L-gamma-glutamyl-alpha-amino acid substrates such as L-gamma-glutamyl-L-alpha-cysteine and L-gamma-glutamyl-L-alpha-alanine. In Mus musculus (Mouse), this protein is Gamma-glutamylaminecyclotransferase (Ggact).